The primary structure comprises 631 residues: DDB1- and CUL4-associated factor 8-like protein 2 (631 aa).

2 disordered regions span residues 1-91 (MSHQ…EDFE) and 108-163 (EEET…HEQY). The segment covering 44-54 (SELSVTVTGDG) has biased composition (polar residues). Composition is skewed to acidic residues over residues 77 to 88 (SASEDIELESLE) and 108 to 147 (EEET…EEEE). 7 WD repeats span residues 226 to 265 (DHVG…PVLN), 269 to 310 (GHTN…YFNN), 316 to 356 (QHRG…PASK), 364 to 404 (DKKV…KKEN), 420 to 459 (DFPT…GAQY), 467 to 507 (RNNT…IIQF), and 511 to 550 (SREG…ATEL). The disordered stretch occupies residues 594–631 (QDWRSGEAEFPDEESDESSSTSETSEEEVQDRVQCMPS).

Belongs to the WD repeat DCAF8 family.

The protein is DDB1- and CUL4-associated factor 8-like protein 2 (DCAF8L2) of Homo sapiens (Human).